Consider the following 333-residue polypeptide: Homocysteine S-methyltransferase 2 (333 aa).

The 320-residue stretch at 8–327 (SMKDFLKQTG…TTIRAIHKRL (320 aa)) folds into the Hcy-binding domain. Zn(2+) contacts are provided by cysteine 245, cysteine 312, and cysteine 313.

In terms of assembly, monomer. Requires Zn(2+) as cofactor. As to expression, expressed predominantly in roots. Expressed in rosette leaves, cauline leaves and developing seeds.

It carries out the reaction S-methyl-L-methionine + L-homocysteine = 2 L-methionine + H(+). Functionally, catalyzes methyl transfer from S-methylmethionine (SMM) to adenosyl-L-homocysteine (AdoMet). SMM degradation (by HMT-1, HMT-2 and HMT-3) and biosynthesis (by MMT1) constitute the SMM cycle in plants, which is probably required to achieve short term control of AdoMet level. The chain is Homocysteine S-methyltransferase 2 (HMT-2) from Arabidopsis thaliana (Mouse-ear cress).